The sequence spans 337 residues: MVDYVTDIVVIGAGPIGIFTVFQSGMLSMQCCVIDTLNEIGGQCVALYPEKPIYDIPAYPIITAKELINNLVEQSKPFDPQYLLGQMAEKIEEYMDYLLVKTNYGTVIQCKAIIIAAGSGAFGPNRLPVDNIIDFENKSVFYSVKQISDFYDKSVMIAGGGDSAADWAVELSKVTKQLYMVHRRKNFRCSPNTSLKLDDLFQRGKINLVVPYQIKQLCGKDGKLDYVVVKNITTSEELTLQVDYLLPFFGTSANLGPILNWGITISGYQIVIDPATCRTNRNKIYAVGDISTYPGKIKLILTGFSESAMACHDIYHIVYPNSPLNFQYSTSKGIPKV.

FAD contacts are provided by D35, Q43, Y48, A88, F122, D289, and T330.

Belongs to the ferredoxin--NADP reductase type 2 family. In terms of assembly, homodimer. FAD is required as a cofactor.

The catalysed reaction is 2 reduced [2Fe-2S]-[ferredoxin] + NADP(+) + H(+) = 2 oxidized [2Fe-2S]-[ferredoxin] + NADPH. The polypeptide is Ferredoxin--NADP reductase (Ehrlichia ruminantium (strain Gardel)).